A 720-amino-acid chain; its full sequence is Receptor-like protein CLAVATA2 (720 aa).

The first 25 residues, 1 to 25 (MIKIADFTLFFFIFVFSPSLPLAQS), serve as a signal peptide directing secretion. The tract at residues 26–92 (QLPDLDPQDK…LNLSSQIHPS (67 aa)) is N-cap. Residues 26–686 (QLPDLDPQDK…QNELVEGPIS (661 aa)) lie on the Extracellular side of the membrane. Asn-49, Asn-62, Asn-84, Asn-108, Asn-127, and Asn-168 each carry an N-linked (GlcNAc...) asparagine glycan. Cys-60 and Cys-68 are oxidised to a cystine. LRR repeat units lie at residues 96–122 (LSSL…SLRN), 124–144 (RTLN…FVSL), 146–168 (ELRE…WFGN), 170–194 (SMNL…LLYL), 195–217 (KSLK…FQQP), 219–238 (VVLN…FYAS), 239–263 (RPSL…LGSL), 264–287 (KELS…LMFS), 288–311 (EKLV…ISET), 314–338 (KLGL…ITEL), 339–362 (KSLQ…IGNL), 364–386 (YLQV…IVGC), 388–410 (QLLA…LDAL), 411–436 (DSLK…GLKS), 438–458 (EIVD…ITKW), 459–482 (SNLK…LFKF), 484–506 (KIQM…NLNS), 547–571 (LLSM…LFRQ), 573–594 (NIEY…LEKL), 595–617 (PRLK…NISA), and 619–641 (PGLT…KEGL). A glycan (N-linked (GlcNAc...) asparagine) is linked at Asn-206. Asn-270 is a glycosylation site (N-linked (GlcNAc...) asparagine). N-linked (GlcNAc...) asparagine glycosylation occurs at Asn-361. The N-linked (GlcNAc...) asparagine glycan is linked to Asn-398. Asn-446 carries an N-linked (GlcNAc...) asparagine glycan. Asn-505 carries an N-linked (GlcNAc...) asparagine glycan. Asn-578, Asn-614, and Asn-625 each carry an N-linked (GlcNAc...) asparagine glycan. Residues 649-682 (AGNPELCVETPGSKCDPANIDASQEEIYQNELVE) are C-cap/acidic domain. The chain crosses the membrane as a helical span at residues 687–707 (IWIFCLSAFISFDFGVLGIFC). At 708-720 (SARARSYILQTKA) the chain is on the cytoplasmic side.

This sequence belongs to the RLP family. As to quaternary structure, parts of a tetrameric complex made of two CLV2/CRN heterodimers that can interact with CLV3 and CLE peptides. CLV2/CRN heterodimer interacts with CLV1 homodimers. Interacts with CRN; this dimer can interact with BAM3. Interacts with CLE14. Mostly expressed in apices (e.g. shoot apical meristem and flower buds), and, to a lower extent, in flowers, leaves, seedlings and siliques. Also expressed in the inner tissues of the proximal root meristem. Expressed throughout the vascular cylinder of root tips.

It localises to the cell membrane. Its subcellular location is the endoplasmic reticulum membrane. Functionally, involved in the perception of CLV3 and CLV3-like (CLE) peptides, that act as extracellular signals regulating meristems maintenance. Required for the sensing of the root CLE peptides (e.g. CLE8, CLE9/CLE10, CLE11, CLE13, CLE14, CLE16, CLE17, CLE18, CLE20, CLE21, CLE25, CLE26, CLE40, CLE41/CLE44 and CLE45), which also involves CRN and leads to root growth regulation, mostly in the phloem and protophloem. Involved in controlling the stem cell population size in shoot and root apical meristems, and during organ development. Promotes the formation of CLV1 multimers. In complex with CRN, perceives secreted CLV3-like effector proteins from plant-parasitic cyst nematodes as ligand mimics of the plant CLE signaling pathway. This recognition is required for proper feeding structure (syncytium) development and ultimately successful nematode infection. CLE14 perception by CLV2/CRN complex triggers root meristem differentiation. This Arabidopsis thaliana (Mouse-ear cress) protein is Receptor-like protein CLAVATA2.